Consider the following 353-residue polypeptide: Photosystem II D2 protein (353 aa).

An N-acetylthreonine modification is found at T2. Phosphothreonine is present on T2. Residues 41–61 traverse the membrane as a helical segment; the sequence is CAYFALGGWFTGTTFVTSWYT. Residue H118 coordinates chlorophyll a. A helical transmembrane segment spans residues 125–141; that stretch reads GFMLRQFELARSVQLRP. The pheophytin a site is built by Q130 and N143. Residues 153–166 form a helical membrane-spanning segment; that stretch reads VFVSVFLIYPLGQS. Chlorophyll a is bound at residue H198. Residues 208–228 form a helical membrane-spanning segment; it reads AALLCAIHGATVENTLFEDGD. A plastoquinone contacts are provided by H215 and F262. Fe cation is bound at residue H215. H269 serves as a coordination point for Fe cation. The helical transmembrane segment at 279-295 threads the bilayer; it reads GLWMSAIGVVGLALNLR.

It belongs to the reaction center PufL/M/PsbA/D family. In terms of assembly, PSII is composed of 1 copy each of membrane proteins PsbA, PsbB, PsbC, PsbD, PsbE, PsbF, PsbH, PsbI, PsbJ, PsbK, PsbL, PsbM, PsbT, PsbX, PsbY, PsbZ, Psb30/Ycf12, at least 3 peripheral proteins of the oxygen-evolving complex and a large number of cofactors. It forms dimeric complexes. The D1/D2 heterodimer binds P680, chlorophylls that are the primary electron donor of PSII, and subsequent electron acceptors. It shares a non-heme iron and each subunit binds pheophytin, quinone, additional chlorophylls, carotenoids and lipids. There is also a Cl(-1) ion associated with D1 and D2, which is required for oxygen evolution. The PSII complex binds additional chlorophylls, carotenoids and specific lipids. is required as a cofactor.

It is found in the plastid. It localises to the chloroplast thylakoid membrane. It catalyses the reaction 2 a plastoquinone + 4 hnu + 2 H2O = 2 a plastoquinol + O2. Functionally, photosystem II (PSII) is a light-driven water:plastoquinone oxidoreductase that uses light energy to abstract electrons from H(2)O, generating O(2) and a proton gradient subsequently used for ATP formation. It consists of a core antenna complex that captures photons, and an electron transfer chain that converts photonic excitation into a charge separation. The D1/D2 (PsbA/PsbD) reaction center heterodimer binds P680, the primary electron donor of PSII as well as several subsequent electron acceptors. D2 is needed for assembly of a stable PSII complex. In Agrostis stolonifera (Creeping bentgrass), this protein is Photosystem II D2 protein.